The chain runs to 344 residues: NADH-quinone oxidoreductase subunit H 2 (344 aa).

Helical transmembrane passes span 13–33, 82–102, 116–136, 161–181, 188–208, 240–260, 280–300, and 319–339; these read LPILFKIVAIVLPLILIVAWL, ILFLLAPVLAIAPALAVWAVI, ALLYILAIGSMSVYGIILAGW, MGFALVGVLIAGGSLNLGEIV, FWHWFWLPLFPLFLIYFISGV, LFFLAEYIEMILVSTLAALMF, VPGIVWLLIKTAIFLFFYLWF, and VFIPITIVWLLVVGGARVAQL.

This sequence belongs to the complex I subunit 1 family. As to quaternary structure, NDH-1 is composed of 14 different subunits. Subunits NuoA, H, J, K, L, M, N constitute the membrane sector of the complex.

Its subcellular location is the cell inner membrane. It catalyses the reaction a quinone + NADH + 5 H(+)(in) = a quinol + NAD(+) + 4 H(+)(out). NDH-1 shuttles electrons from NADH, via FMN and iron-sulfur (Fe-S) centers, to quinones in the respiratory chain. The immediate electron acceptor for the enzyme in this species is believed to be ubiquinone. Couples the redox reaction to proton translocation (for every two electrons transferred, four hydrogen ions are translocated across the cytoplasmic membrane), and thus conserves the redox energy in a proton gradient. This subunit may bind ubiquinone. This is NADH-quinone oxidoreductase subunit H 2 from Nitrosococcus oceani (strain ATCC 19707 / BCRC 17464 / JCM 30415 / NCIMB 11848 / C-107).